A 215-amino-acid chain; its full sequence is Nascent polypeptide-associated complex subunit alpha (215 aa).

Residues 1–81 (MPGEATETVP…SEKKARKAMS (81 aa)) are disordered. Residues 9–28 (VPATEQELPQPQAETGSGTE) show a composition bias toward polar residues. Residues 29–42 (SDSDESVPELEEQD) are compositionally biased toward acidic residues. Ser43 is subject to Phosphoserine; by ILK1. Positions 44–57 (TQATTQQAQLAAAA) are enriched in low complexity. The interval 69–80 (QSRSEKKARKAM) is required for DNA-binding. One can recognise an NAC-A/B domain in the interval 70–135 (SRSEKKARKA…AKIEDLSQQA (66 aa)). The tract at residues 93-108 (RVTIRKSKNILFVITK) is RNA/DNA-binding. Ser132 is subject to Phosphoserine. N6-acetyllysine; alternate is present on Lys142. Lys142 participates in a covalent cross-link: Glycyl lysine isopeptide (Lys-Gly) (interchain with G-Cter in SUMO2); alternate. Thr159 is subject to Phosphothreonine; by GSK3-beta. Position 161 is a phosphothreonine (Thr161). A phosphoserine mark is found at Ser166, Ser186, Ser191, and Ser203. The region spanning 176 to 213 (VEVKDIELVMSQANVSRAKAVRALKNNSNDIVNAIMEL) is the UBA domain.

It belongs to the NAC-alpha family. As to quaternary structure, interacts with TBP and JUN. Part of the nascent polypeptide-associated complex (NAC), which is a heterodimer of NACA and BTF3 (via NAC-A/B domains). NAC associates with ribosomes through the BTF3/NACB subunit and contacts the ribosomal protein L23, which is positioned near the exiting site. Both subunits can contact nascent polypeptide chains. NACA may also form homodimers, and only this form binds DNA. Post-translationally, phosphorylation of Thr-159 by GSK3B may promote proteasome mediated degradation. Phosphorylation of Ser-43 by ILK during cell adhesion may promote nuclear localization. As to expression, ubiquitously expressed.

The protein resides in the cytoplasm. Its subcellular location is the nucleus. Its function is as follows. Prevents inappropriate targeting of non-secretory polypeptides to the endoplasmic reticulum (ER). Binds to nascent polypeptide chains as they emerge from the ribosome and blocks their interaction with the signal recognition particle (SRP), which normally targets nascent secretory peptides to the ER. Also reduces the inherent affinity of ribosomes for protein translocation sites in the ER membrane (M sites). May act as a specific coactivator for JUN, binding to DNA and stabilizing the interaction of JUN homodimers with target gene promoters. The polypeptide is Nascent polypeptide-associated complex subunit alpha (NACA) (Homo sapiens (Human)).